The following is a 206-amino-acid chain: MAKIIGISGGSGSGKTTVVSKISEFIPEFVLISQDNYYKSVGDYEYEFSKVNFDHPDAFDNNLFYEHLKNLKKNSPIDMPLYDFINHKRQLKTVMVVPTPVIIVEGIMIFVEERVRNLIDLKIYIDTPNDIRFIRRLKRDISKRGRTLESVIDQYLNTTRWGYYRFIEPTKEYADLIIPEGGHNDKALYVLSTFLKSLSKEGLDFV.

9-16 contributes to the ATP binding site; it reads GGSGSGKT.

This sequence belongs to the uridine kinase family.

Its subcellular location is the cytoplasm. The enzyme catalyses uridine + ATP = UMP + ADP + H(+). The catalysed reaction is cytidine + ATP = CMP + ADP + H(+). Its pathway is pyrimidine metabolism; CTP biosynthesis via salvage pathway; CTP from cytidine: step 1/3. It participates in pyrimidine metabolism; UMP biosynthesis via salvage pathway; UMP from uridine: step 1/1. The protein is Uridine kinase of Borrelia garinii subsp. bavariensis (strain ATCC BAA-2496 / DSM 23469 / PBi) (Borreliella bavariensis).